The primary structure comprises 261 residues: tRNA pseudouridine synthase A (261 aa).

Asp-51 functions as the Nucleophile in the catalytic mechanism. Tyr-109 provides a ligand contact to substrate.

The protein belongs to the tRNA pseudouridine synthase TruA family. As to quaternary structure, homodimer.

It carries out the reaction uridine(38/39/40) in tRNA = pseudouridine(38/39/40) in tRNA. Formation of pseudouridine at positions 38, 39 and 40 in the anticodon stem and loop of transfer RNAs. The sequence is that of tRNA pseudouridine synthase A from Shewanella baltica (strain OS155 / ATCC BAA-1091).